A 182-amino-acid polypeptide reads, in one-letter code: Epididymal-specific lipocalin-10 (182 aa).

An N-terminal signal peptide occupies residues 1–19 (MKLEMALSIALALAVVSWT). 2 N-linked (GlcNAc...) asparagine glycosylation sites follow: Asn-31 and Asn-144. Cys-85 and Cys-176 are disulfide-bonded. Lys-165 carries the post-translational modification N6-acetyllysine.

This sequence belongs to the calycin superfamily. Lipocalin family. As to expression, expressed in epididymis.

The protein localises to the secreted. Its function is as follows. May play a role in male fertility. May act as a retinoid carrier protein within the epididymis. The sequence is that of Epididymal-specific lipocalin-10 (Lcn10) from Mus musculus (Mouse).